The following is a 196-amino-acid chain: Regulator of G-protein signaling 1 (196 aa).

The disordered stretch occupies residues 1 to 27; that stretch reads MPGMFFSANPKDLKGTDQSLLDDKTQK. The segment covering 11 to 25 has biased composition (basic and acidic residues); the sequence is KDLKGTDQSLLDDKT. The RGS domain occupies 72-187; that stretch reads SLEKLLANQT…LKSNIYLNLL (116 aa).

In terms of assembly, interacts with GNAI1 and GNAQ.

The protein resides in the cell membrane. It localises to the cytoplasm. It is found in the cytosol. Regulates G protein-coupled receptor signaling cascades, including signaling downstream of the N-formylpeptide chemoattractant receptors and leukotriene receptors. Inhibits B cell chemotaxis toward CXCL12. Inhibits signal transduction by increasing the GTPase activity of G protein alpha subunits, thereby driving them into their inactive GDP-bound form. This Equus caballus (Horse) protein is Regulator of G-protein signaling 1 (RGS1).